Here is a 195-residue protein sequence, read N- to C-terminus: Probable chemoreceptor glutamine deamidase CheD 2 (195 aa).

Belongs to the CheD family.

It catalyses the reaction L-glutaminyl-[protein] + H2O = L-glutamyl-[protein] + NH4(+). Functionally, probably deamidates glutamine residues to glutamate on methyl-accepting chemotaxis receptors (MCPs), playing an important role in chemotaxis. This is Probable chemoreceptor glutamine deamidase CheD 2 from Burkholderia thailandensis (strain ATCC 700388 / DSM 13276 / CCUG 48851 / CIP 106301 / E264).